The chain runs to 93 residues: Signal recognition particle 19 kDa protein (93 aa).

Belongs to the SRP19 family. As to quaternary structure, part of the signal recognition particle protein translocation system, which is composed of SRP and FtsY. Archaeal SRP consists of a 7S RNA molecule of 300 nucleotides and two protein subunits: SRP54 and SRP19.

Its subcellular location is the cytoplasm. Its function is as follows. Involved in targeting and insertion of nascent membrane proteins into the cytoplasmic membrane. Binds directly to 7S RNA and mediates binding of the 54 kDa subunit of the SRP. In Haloquadratum walsbyi (strain DSM 16790 / HBSQ001), this protein is Signal recognition particle 19 kDa protein.